The following is a 346-amino-acid chain: Phosphoribosylformylglycinamidine cyclo-ligase (346 aa).

The protein belongs to the AIR synthase family.

The protein resides in the cytoplasm. It catalyses the reaction 2-formamido-N(1)-(5-O-phospho-beta-D-ribosyl)acetamidine + ATP = 5-amino-1-(5-phospho-beta-D-ribosyl)imidazole + ADP + phosphate + H(+). Its pathway is purine metabolism; IMP biosynthesis via de novo pathway; 5-amino-1-(5-phospho-D-ribosyl)imidazole from N(2)-formyl-N(1)-(5-phospho-D-ribosyl)glycinamide: step 2/2. The sequence is that of Phosphoribosylformylglycinamidine cyclo-ligase from Prochlorococcus marinus (strain NATL2A).